A 548-amino-acid polypeptide reads, in one-letter code: Thermostable neutral protease NprT (548 aa).

Positions 1–25 (MNKRAMLGAIGLAFGLLAAPIGASA) are cleaved as a signal peptide. Positions 26–229 (KGESIVWNEQ…DSRQPGGGQP (204 aa)) are cleaved as a propeptide — activation peptide. Residues D289, D291, Q293, and D370 each coordinate Ca(2+). Position 374 (H374) interacts with Zn(2+). E375 is a catalytic residue. The Zn(2+) site is built by H378 and E398. Ca(2+)-binding residues include E409, N415, D417, E419, E422, Y425, T426, V429, and D432. The Proton donor role is filled by H463.

This sequence belongs to the peptidase M4 family. Ca(2+) is required as a cofactor. It depends on Zn(2+) as a cofactor.

Its subcellular location is the secreted. With respect to regulation, its casein hydrolytic activity is inhibited almost completely by a chelating agent (EDTA), whereas neither diisopropyl fluorophosphate nor phenylmethylsulfonyl fluoride inhibit the proteolytic activity in vitro. Extracellular zinc metalloprotease. In Geobacillus stearothermophilus (Bacillus stearothermophilus), this protein is Thermostable neutral protease NprT (nprT).